A 428-amino-acid polypeptide reads, in one-letter code: Phosphomethylpyrimidine synthase 2 (428 aa).

Substrate contacts are provided by residues Asn65, Met94, Tyr123, His158, 180–182 (SRG), 221–224 (DGMR), and Glu260. His264 provides a ligand contact to Zn(2+). A substrate-binding site is contributed by Tyr287. Residue His328 coordinates Zn(2+). Cys405, Cys408, and Cys412 together coordinate [4Fe-4S] cluster.

Belongs to the ThiC family. It depends on [4Fe-4S] cluster as a cofactor.

The catalysed reaction is 5-amino-1-(5-phospho-beta-D-ribosyl)imidazole + S-adenosyl-L-methionine = 4-amino-2-methyl-5-(phosphooxymethyl)pyrimidine + CO + 5'-deoxyadenosine + formate + L-methionine + 3 H(+). It participates in cofactor biosynthesis; thiamine diphosphate biosynthesis. Functionally, catalyzes the synthesis of the hydroxymethylpyrimidine phosphate (HMP-P) moiety of thiamine from aminoimidazole ribotide (AIR) in a radical S-adenosyl-L-methionine (SAM)-dependent reaction. This is Phosphomethylpyrimidine synthase 2 from Methanosarcina barkeri (strain Fusaro / DSM 804).